Reading from the N-terminus, the 372-residue chain is Forkhead box protein F1-B (372 aa).

The disordered stretch occupies residues 1–51 (MTAEIQQPPSQPPAQSSPMSAATDKHGGQPSAMESASCATKTKKTNAGIRR). The segment covering 13–22 (PAQSSPMSAA) has biased composition (low complexity). A DNA-binding region (fork-head) is located at residues 54-148 (KPPYSYIALI…EEGSFRRRPR (95 aa)).

In terms of tissue distribution, at the late gastrula stage, expressed in the presumptive ventrolateral mesoderm. During neurulation and tailbud stages, expressed in the lateral plate mesoderm and in the neural crest-derived structures of the head and branchial arches. During tailbud stages, expressed in the pronephros and pronephros ducts and in cells that migrate from the dorsolateral plate to the ventral region of the embryo (with the notable exception of the heart). These cells may represent hematopoietic or endothelial progenitor cells.

Its subcellular location is the nucleus. Probable transcription factor. Required for smooth muscle (visceral mesoderm) differentiation during gut development. Also required for normal proliferation of the lateral plate mesoderm. Acts as a downstream mediator of bmp4-signaling. In Xenopus laevis (African clawed frog), this protein is Forkhead box protein F1-B (foxf1-b).